Reading from the N-terminus, the 519-residue chain is LysM domain-containing protein ARB_03442 (519 aa).

Residues 1-19 form the signal peptide; that stretch reads MGQLKQLAGILALASPAIA. N-linked (GlcNAc...) asparagine glycosylation is present at Asn47. A LysM domain is found at 312–358; it reads KYYNVVAGDTCASISSEFEVTMDELLTYNPELHPNCENLWANFAICV. Residues 314–358 form a lysM domain region; the sequence is YNVVAGDTCASISSEFEVTMDELLTYNPELHPNCENLWANFAICV. Residues 407–416 show a composition bias toward low complexity; the sequence is PDAPDAQGQT. The tract at residues 407–458 is disordered; the sequence is PDAPDAQGQTVHDDEPPEEPHIEEPPKDIPAGDDDDRKKAKLPLPSGKYPLP. Over residues 417–433 the composition is skewed to basic and acidic residues; sequence VHDDEPPEEPHIEEPPK. Asn460 carries N-linked (GlcNAc...) asparagine glycosylation. The Chitin-binding type-1 domain occupies 467–510; that stretch reads DGSCNEYISCVGSPFGVCCSTSGWCGYGKPWCGVGNCVSGYCDT. 4 cysteine pairs are disulfide-bonded: Cys470/Cys485, Cys476/Cys491, Cys484/Cys498, and Cys503/Cys508.

It is found in the secreted. Functionally, might have a role in sequestration of chitin oligosaccharides (breakdown products of fungal cell walls that are released during invasion and act as triggers of host immunity) to dampen host defense. This is LysM domain-containing protein ARB_03442 from Arthroderma benhamiae (strain ATCC MYA-4681 / CBS 112371) (Trichophyton mentagrophytes).